The primary structure comprises 213 residues: Orotate phosphoribosyltransferase (213 aa).

Lys26 contributes to the 5-phospho-alpha-D-ribose 1-diphosphate binding site. Orotate is bound at residue 34-35 (FF). 5-phospho-alpha-D-ribose 1-diphosphate is bound by residues 72–73 (YK), Arg99, Lys100, Lys103, His105, and 124–132 (DDVITAGTA). Orotate-binding residues include Thr128 and Arg156.

It belongs to the purine/pyrimidine phosphoribosyltransferase family. PyrE subfamily. In terms of assembly, homodimer. Mg(2+) is required as a cofactor.

The enzyme catalyses orotidine 5'-phosphate + diphosphate = orotate + 5-phospho-alpha-D-ribose 1-diphosphate. It functions in the pathway pyrimidine metabolism; UMP biosynthesis via de novo pathway; UMP from orotate: step 1/2. Functionally, catalyzes the transfer of a ribosyl phosphate group from 5-phosphoribose 1-diphosphate to orotate, leading to the formation of orotidine monophosphate (OMP). The polypeptide is Orotate phosphoribosyltransferase (Escherichia coli O139:H28 (strain E24377A / ETEC)).